A 64-amino-acid chain; its full sequence is Large ribosomal subunit protein bL35 (64 aa).

Residues 17–41 (TGSGKVKRERMNGSHNLEHKNRKRT) form a disordered region. Basic and acidic residues predominate over residues 25-35 (ERMNGSHNLEH).

Belongs to the bacterial ribosomal protein bL35 family.

The sequence is that of Large ribosomal subunit protein bL35 from Chlorobaculum parvum (strain DSM 263 / NCIMB 8327) (Chlorobium vibrioforme subsp. thiosulfatophilum).